A 214-amino-acid polypeptide reads, in one-letter code: Large ribosomal subunit protein uL4c (214 aa).

Positions 42–81 (VKQSNEKRQGSANTKTRSEVRGGGRKPWRQKGTGRARAGS) are disordered. Positions 64 to 75 (GGRKPWRQKGTG) are enriched in basic residues.

Belongs to the universal ribosomal protein uL4 family. In terms of assembly, part of the 50S ribosomal subunit.

It is found in the plastid. The protein localises to the chloroplast. Probably binds the 23S rRNA. The protein is Large ribosomal subunit protein uL4c (rpl4) of Pyropia yezoensis (Susabi-nori).